The primary structure comprises 761 residues: Zinc finger protein 287 (761 aa).

Residues 49-131 form the SCAN box domain; it reads RQNFRNFPYP…TLVEDLTQIL (83 aa). The disordered stretch occupies residues 134 to 154; it reads EAPQNSTLSQDTPEEDPRGKH. The KRAB domain occupies 170–238; sequence MTFKDVAVDI…IKEILEGPSP (69 aa). 14 C2H2-type zinc fingers span residues 368–390, 396–418, 424–446, 452–474, 480–502, 508–530, 536–558, 564–586, 592–614, 620–642, 648–670, 676–698, 704–726, and 732–754; these read YKCN…QSTH, YECE…QRMH, YECH…QRIH, YKCD…QRTH, YKCL…QRVH, YICN…QKIH, YKCN…QRIH, YKCN…QTTH, YICN…HRTH, YKCS…QRIH, FKCN…QRIH, YKCN…QRTH, and YACR…QRVH.

Belongs to the krueppel C2H2-type zinc-finger protein family.

The protein resides in the nucleus. May be involved in transcriptional regulation. This chain is Zinc finger protein 287, found in Pongo pygmaeus (Bornean orangutan).